The sequence spans 284 residues: Nucleotide-binding protein in ptsO 5'region (284 aa).

8 to 15 is a binding site for ATP; the sequence is GRSGSGKS. 60 to 63 provides a ligand contact to GTP; the sequence is DARN.

The protein belongs to the RapZ-like family.

Its function is as follows. Displays ATPase and GTPase activities. The sequence is that of Nucleotide-binding protein in ptsO 5'region from Pseudomonas putida (Arthrobacter siderocapsulatus).